Reading from the N-terminus, the 362-residue chain is UDP-N-acetylglucosamine--N-acetylmuramyl-(pentapeptide) pyrophosphoryl-undecaprenol N-acetylglucosamine transferase (362 aa).

UDP-N-acetyl-alpha-D-glucosamine is bound by residues 15–17 (TGG), Asn-127, Arg-165, Ser-191, Ile-247, 266–271 (ALTVSE), and Gln-292.

This sequence belongs to the glycosyltransferase 28 family. MurG subfamily.

It is found in the cell inner membrane. The catalysed reaction is di-trans,octa-cis-undecaprenyl diphospho-N-acetyl-alpha-D-muramoyl-L-alanyl-D-glutamyl-meso-2,6-diaminopimeloyl-D-alanyl-D-alanine + UDP-N-acetyl-alpha-D-glucosamine = di-trans,octa-cis-undecaprenyl diphospho-[N-acetyl-alpha-D-glucosaminyl-(1-&gt;4)]-N-acetyl-alpha-D-muramoyl-L-alanyl-D-glutamyl-meso-2,6-diaminopimeloyl-D-alanyl-D-alanine + UDP + H(+). It functions in the pathway cell wall biogenesis; peptidoglycan biosynthesis. Cell wall formation. Catalyzes the transfer of a GlcNAc subunit on undecaprenyl-pyrophosphoryl-MurNAc-pentapeptide (lipid intermediate I) to form undecaprenyl-pyrophosphoryl-MurNAc-(pentapeptide)GlcNAc (lipid intermediate II). This Shewanella baltica (strain OS155 / ATCC BAA-1091) protein is UDP-N-acetylglucosamine--N-acetylmuramyl-(pentapeptide) pyrophosphoryl-undecaprenol N-acetylglucosamine transferase.